Here is a 1448-residue protein sequence, read N- to C-terminus: Sister chromatid cohesion protein PDS5 homolog B-A (1448 aa).

Residues 383–419 (LLVNDQLLNFVRERTLDKRWRVRKEAMMGLAQIYKKY) form an HEAT repeat. The span at 1141–1155 (AGKQMLSKSSRMETV) shows a compositional bias: polar residues. Residues 1141 to 1448 (AGKQMLSKSS…TGRLRSAKKR (308 aa)) form a disordered region. The segment covering 1156 to 1168 (SNASSGSNPSSPG) has biased composition (low complexity). A compositionally biased stretch (acidic residues) spans 1177–1186 (MELDQSENED). Composition is skewed to basic and acidic residues over residues 1196-1214 (KKSDKRDDSDLLKSELEKP), 1233-1243 (ELSKPAQEPKS), and 1264-1273 (WQEKRLKEDL). The segment covering 1285-1294 (KKGRRGRPPK) has biased composition (basic residues). Residues 1286 to 1298 (KGRRGRPPKSAKM) constitute a DNA-binding region (a.T hook 1). The span at 1324–1341 (PTDEDDHLEISEEQDFEN) shows a compositional bias: acidic residues. Basic residues predominate over residues 1346–1356 (RKGRGSSRRTP). 2 DNA-binding regions (a.T hook) span residues 1374–1386 (QKRRGRPPKTPTV) and 1390–1402 (KSHVGRPRKVVSK). Residues 1389 to 1399 (KKSHVGRPRKV) are compositionally biased toward basic residues.

It belongs to the PDS5 family. In terms of assembly, interacts with the cohesin complex. Post-translationally, phosphorylated in mitotic cells.

The protein localises to the nucleus. In terms of biological role, plays a role in androgen-induced proliferative arrest. Required for maintenance of sister chromatid cohesion during mitosis. In Xenopus laevis (African clawed frog), this protein is Sister chromatid cohesion protein PDS5 homolog B-A (pds5b-a).